Reading from the N-terminus, the 464-residue chain is Keratin, type I cytoskeletal 28 (464 aa).

The interval 1–85 (MSLRFSSGSR…GSEGGLFSGN (85 aa)) is head. Residues 86–121 (EKVTMQNLNDRLASYLDNVRALEEANAELERKIKSW) are coil 1A. In terms of domain architecture, IF rod spans 86–401 (EKVTMQNLND…RLIDGDRNSC (316 aa)). A linker 1 region spans residues 122–143 (YEKHGPGSCHGLDHDYSRYHLT). The interval 144-235 (IEDLKNKIIS…KNHEEEVKAL (92 aa)) is coil 1B. Residues 236–258 (QCVAGGNVNVEMNAAPGVDLTLL) form a linker 12 region. The tract at residues 259 to 397 (LNNMRAEYED…ETYCRLIDGD (139 aa)) is coil 2. The tract at residues 398–464 (RNSCSKSKGF…NGKTKQRVPF (67 aa)) is tail. A compositionally biased stretch (low complexity) spans 402-417 (SKSKGFGSGSPGNSSK). Disordered regions lie at residues 402–422 (SKSKGFGSGSPGNSSKDLSRT) and 440–464 (SSRVQSIEEKTSKMTNGKTKQRVPF).

It belongs to the intermediate filament family. Heterotetramer of two type I and two type II keratins.

Its subcellular location is the cytoplasm. In terms of biological role, essential for the proper assembly of types I and II keratin protein complexes and the formation of keratin intermediate filaments in the inner root sheath (irs). This Bos taurus (Bovine) protein is Keratin, type I cytoskeletal 28.